The sequence spans 31 residues: Cytochrome b6-f complex subunit 6 (31 aa).

Residues 4–24 (ILTYFGILFGILTITVIIFVA) traverse the membrane as a helical segment.

The protein belongs to the PetL family. As to quaternary structure, the 4 large subunits of the cytochrome b6-f complex are cytochrome b6, subunit IV (17 kDa polypeptide, PetD), cytochrome f and the Rieske protein, while the 4 small subunits are PetG, PetL, PetM and PetN. The complex functions as a dimer.

It is found in the plastid. The protein resides in the chloroplast thylakoid membrane. In terms of biological role, component of the cytochrome b6-f complex, which mediates electron transfer between photosystem II (PSII) and photosystem I (PSI), cyclic electron flow around PSI, and state transitions. PetL is important for photoautotrophic growth as well as for electron transfer efficiency and stability of the cytochrome b6-f complex. The sequence is that of Cytochrome b6-f complex subunit 6 from Chaetosphaeridium globosum (Charophycean green alga).